The chain runs to 70 residues: Large ribosomal subunit protein bL31 (70 aa).

Residues Cys-16, Cys-18, Cys-37, and Cys-40 each contribute to the Zn(2+) site.

It belongs to the bacterial ribosomal protein bL31 family. Type A subfamily. In terms of assembly, part of the 50S ribosomal subunit. The cofactor is Zn(2+).

Functionally, binds the 23S rRNA. This is Large ribosomal subunit protein bL31 from Saccharophagus degradans (strain 2-40 / ATCC 43961 / DSM 17024).